Consider the following 439-residue polypeptide: Trigger factor (439 aa).

Residues 163–248 (GDRVTIDYRG…LNKLEAPKLP (86 aa)) form the PPIase FKBP-type domain.

This sequence belongs to the FKBP-type PPIase family. Tig subfamily.

The protein localises to the cytoplasm. The enzyme catalyses [protein]-peptidylproline (omega=180) = [protein]-peptidylproline (omega=0). Involved in protein export. Acts as a chaperone by maintaining the newly synthesized protein in an open conformation. Functions as a peptidyl-prolyl cis-trans isomerase. The protein is Trigger factor of Nitrosomonas europaea (strain ATCC 19718 / CIP 103999 / KCTC 2705 / NBRC 14298).